Consider the following 405-residue polypeptide: Acetate kinase (405 aa).

N7 serves as a coordination point for Mg(2+). K14 is a binding site for ATP. A substrate-binding site is contributed by R90. The active-site Proton donor/acceptor is D147. ATP-binding positions include 207–211 (HLGNG), 282–284 (DFR), and 331–335 (GVGEN). Residue E384 coordinates Mg(2+).

It belongs to the acetokinase family. In terms of assembly, homodimer. Requires Mg(2+) as cofactor. The cofactor is Mn(2+).

Its subcellular location is the cytoplasm. The catalysed reaction is acetate + ATP = acetyl phosphate + ADP. Its pathway is metabolic intermediate biosynthesis; acetyl-CoA biosynthesis; acetyl-CoA from acetate: step 1/2. In terms of biological role, catalyzes the formation of acetyl phosphate from acetate and ATP. Can also catalyze the reverse reaction. This is Acetate kinase from Clostridium kluyveri (strain ATCC 8527 / DSM 555 / NBRC 12016 / NCIMB 10680 / K1).